Consider the following 328-residue polypeptide: uncharacterized protein (328 aa).

Residues 1 to 24 (MKSIKGLGKLLLASSILFSSSAFA) form the signal peptide.

It belongs to the bacterial solute-binding protein 7 family.

It is found in the periplasm. This is an uncharacterized protein from Haemophilus influenzae (strain ATCC 51907 / DSM 11121 / KW20 / Rd).